The following is a 664-amino-acid chain: Lysophospholipase 1 (664 aa).

An N-terminal signal peptide occupies residues M1–A22. Residues N26, N33, N52, N78, N92, N123, N160, N170, N215, N277, N307, N345, N388, N459, N489, N513, N541, N565, and N582 are each glycosylated (N-linked (GlcNAc...) asparagine). One can recognise a PLA2c domain in the interval T35 to D586. A lipid anchor (GPI-anchor amidated asparagine) is attached at N634. Residues A635–I664 constitute a propeptide, removed in mature form.

The protein belongs to the lysophospholipase family.

It localises to the cell membrane. It catalyses the reaction a 1-acyl-sn-glycero-3-phosphocholine + H2O = sn-glycerol 3-phosphocholine + a fatty acid + H(+). The catalysed reaction is a 1-acyl-sn-glycero-3-phospho-(1D-myo-inositol) + H2O = sn-glycero-3-phospho-1D-myo-inositol + a fatty acid + H(+). The enzyme catalyses a 1-acyl-sn-glycero-3-phospho-L-serine + H2O = sn-glycero-3-phospho-L-serine + a fatty acid + H(+). It carries out the reaction a 1,2-diacyl-sn-glycero-3-phospho-(1D-myo-inositol) + 2 H2O = sn-glycero-3-phospho-1D-myo-inositol + 2 a carboxylate + 2 H(+). It catalyses the reaction a 1,2-diacyl-sn-glycero-3-phospho-L-serine + 2 H2O = sn-glycero-3-phospho-L-serine + 2 a carboxylate + 2 H(+). The catalysed reaction is 2 1-hexadecanoyl-sn-glycero-3-phosphocholine = 1,2-dihexadecanoyl-sn-glycero-3-phosphocholine + sn-glycerol 3-phosphocholine. The enzyme catalyses 1-hexadecanoyl-sn-glycero-3-phosphocholine + H2O = sn-glycerol 3-phosphocholine + hexadecanoate + H(+). It carries out the reaction 1,2-dihexadecanoyl-sn-glycero-3-phosphocholine + H2O = 1-hexadecanoyl-sn-glycero-3-phosphocholine + hexadecanoate + H(+). In terms of biological role, sequentially removes both fatty acyl groups from diacylglycerophospholipids and therefore has both phospholipase B and lysophospholipase activities. It also displays transacylase activity. Substrate preference is phosphatidylserine &gt; phosphatidylinositol &gt;&gt; phosphatidylcholine &gt; phosphatidylethanolamine. The substrate specificity is pH- and ion-dependent. In contrast with activities observed at optimum pH 3.5, the order of substrate preference at pH 5.5 is phosphatidylcholine = phosphatidylethanolamine &gt;&gt; phosphatidylinositol. Degrades predominantly phosphatidylcholine and to some extent phosphatidylinositol in vivo. The sequence is that of Lysophospholipase 1 from Saccharomyces cerevisiae (strain ATCC 204508 / S288c) (Baker's yeast).